Reading from the N-terminus, the 463-residue chain is Chromosomal replication initiator protein DnaA (463 aa).

Residues 1–83 (MSLSLWQQCL…LRFEVGSKPI (83 aa)) form a domain I, interacts with DnaA modulators region. The tract at residues 83-126 (IVPVAVSSAASSGASVPPAAVRASSLARPSWERVTAQPELSYRS) is domain II. The interval 127-343 (NVNPKHTFDN…GALNRVIANA (217 aa)) is domain III, AAA+ region. ATP is bound by residues Gly171, Gly173, Lys174, and Thr175. A domain IV, binds dsDNA region spans residues 344–463 (NFTGRAITID…FSNLIRTLSS (120 aa)).

Belongs to the DnaA family. As to quaternary structure, oligomerizes as a right-handed, spiral filament on DNA at oriC.

It localises to the cytoplasm. In terms of biological role, plays an essential role in the initiation and regulation of chromosomal replication. ATP-DnaA binds to the origin of replication (oriC) to initiate formation of the DNA replication initiation complex once per cell cycle. Binds the DnaA box (a 9 base pair repeat at the origin) and separates the double-stranded (ds)DNA. Forms a right-handed helical filament on oriC DNA; dsDNA binds to the exterior of the filament while single-stranded (ss)DNA is stabiized in the filament's interior. The ATP-DnaA-oriC complex binds and stabilizes one strand of the AT-rich DNA unwinding element (DUE), permitting loading of DNA polymerase. After initiation quickly degrades to an ADP-DnaA complex that is not apt for DNA replication. Binds acidic phospholipids. This Edwardsiella ictaluri (strain 93-146) protein is Chromosomal replication initiator protein DnaA.